We begin with the raw amino-acid sequence, 1505 residues long: G patch domain-containing protein 8 (1505 aa).

The G-patch domain occupies S40–M86. Residues D89 to A124 adopt a coiled-coil conformation. Residues F136–H160 form a C2H2-type zinc finger. Basic and acidic residues-rich tracts occupy residues L166–A175 and S182–A206. The tract at residues L166–V244 is disordered. Positions V223–D233 are enriched in acidic residues. Residue K311 forms a Glycyl lysine isopeptide (Lys-Gly) (interchain with G-Cter in SUMO2) linkage. 2 stretches are compositionally biased toward basic and acidic residues: residues H322–S339 and E421–K436. Disordered stretches follow at residues H322 to Y393 and Q419 to L537. Over residues S437–A449 the composition is skewed to polar residues. K479 bears the N6-acetyllysine mark. A Glycyl lysine isopeptide (Lys-Gly) (interchain with G-Cter in SUMO2) cross-link involves residue K573. Composition is skewed to basic and acidic residues over residues S575 to E612 and S648 to G665. The interval S575–S1304 is disordered. S648 is modified (phosphoserine). Over residues K666–K687 the composition is skewed to basic residues. The span at A688–K702 shows a compositional bias: basic and acidic residues. The segment covering S703–K715 has biased composition (basic residues). 3 positions are modified to phosphoserine: S733, S735, and S753. Residues A745 to G767 are compositionally biased toward basic and acidic residues. The segment covering A794–H804 has biased composition (basic residues). Residues S832–S849 show a composition bias toward acidic residues. Basic residues predominate over residues S856–R871. Residues R872–D900 show a composition bias toward low complexity. A phosphoserine mark is found at S915 and S918. Over residues S923–Y932 the composition is skewed to basic residues. S985, S1013, S1018, S1037, and S1039 each carry phosphoserine. Residues E1017–R1031 are compositionally biased toward basic and acidic residues. Residues G1050–K1063 are compositionally biased toward basic and acidic residues. S1085 carries the post-translational modification Phosphoserine. 3 stretches are compositionally biased toward basic and acidic residues: residues L1097–V1112, K1163–S1185, and E1211–A1220. Residue K1109 forms a Glycyl lysine isopeptide (Lys-Gly) (interchain with G-Cter in SUMO2) linkage. S1179 carries the post-translational modification Phosphoserine.

In Mus musculus (Mouse), this protein is G patch domain-containing protein 8 (Gpatch8).